The chain runs to 292 residues: Homeobox-leucine zipper protein HOX19 (292 aa).

Disordered regions lie at residues 14–85 (LALG…HSVS), 99–133 (RERA…RLTK), and 217–236 (FAPP…PPAP). The span at 28-74 (TDAAAAHRGGCRRPSPSSQCPPLEPSLTLSLPDDAAAGAAATATATA) shows a compositional bias: low complexity. Residues 99 to 109 (RERAEEADGER) are compositionally biased toward basic and acidic residues. Positions 124–183 (STRKKLRLTKEQSALLEDRFREHSTLNPKQKVALAKQLNLRPRQVEVWFQNRRARTKLKQ) form a DNA-binding region, homeobox. The interval 182–226 (KQTEVDCEFLKRCCETLTEENRRLQRELQELRALKFAPPPPSSAA) is leucine-zipper.

Belongs to the HD-ZIP homeobox family. Class II subfamily. In terms of tissue distribution, expressed in seedlings, roots, stems, leaf sheaths and blades and panicles.

The protein localises to the nucleus. Its function is as follows. Probable transcription factor. The sequence is that of Homeobox-leucine zipper protein HOX19 (HOX19) from Oryza sativa subsp. japonica (Rice).